Consider the following 233-residue polypeptide: MEKTMSNSTSTPAAHRLGLVGRKVGMTRIFTEEGESIPVTVLDVSNNRVTQIKSLEADGYAAVQVAYGTRRASRVAQPQTGHYAKAGTEAGSILKEFRLDPARLAEFTPGAVIAVESVFEAGQQVDVTGTTIGKGFAGTIKRHHFGSQRASHGNSRSHRVPGSIGQAQDPGRIFPGKRMSGHLGDVTRTVQNLDVVRVDAERGLLLVKGAVPGHAGGDVVVRPAIKAPAKKGA.

The segment at 145 to 172 is disordered; that stretch reads FGSQRASHGNSRSHRVPGSIGQAQDPGR. Glutamine 168 carries the post-translational modification N5-methylglutamine.

The protein belongs to the universal ribosomal protein uL3 family. As to quaternary structure, part of the 50S ribosomal subunit. Forms a cluster with proteins L14 and L19. Post-translationally, methylated by PrmB.

In terms of biological role, one of the primary rRNA binding proteins, it binds directly near the 3'-end of the 23S rRNA, where it nucleates assembly of the 50S subunit. This Bordetella petrii (strain ATCC BAA-461 / DSM 12804 / CCUG 43448) protein is Large ribosomal subunit protein uL3.